Here is a 174-residue protein sequence, read N- to C-terminus: Small ribosomal subunit protein uS5 (174 aa).

The 64-residue stretch at 16-79 folds into the S5 DRBM domain; it reads FSELIVSVRR…NAARKNMIRV (64 aa).

It belongs to the universal ribosomal protein uS5 family. Part of the 30S ribosomal subunit. Contacts proteins S4 and S8.

Functionally, with S4 and S12 plays an important role in translational accuracy. Its function is as follows. Located at the back of the 30S subunit body where it stabilizes the conformation of the head with respect to the body. The chain is Small ribosomal subunit protein uS5 from Ehrlichia ruminantium (strain Gardel).